A 175-amino-acid polypeptide reads, in one-letter code: ATP synthase subunit b (175 aa).

The helical transmembrane segment at 19 to 35 (GLIFWTTVTFLIVLFIL) threads the bilayer.

This sequence belongs to the ATPase B chain family. F-type ATPases have 2 components, F(1) - the catalytic core - and F(0) - the membrane proton channel. F(1) has five subunits: alpha(3), beta(3), gamma(1), delta(1), epsilon(1). F(0) has four main subunits: a(1), b(2) and c(10-14). The alpha and beta chains form an alternating ring which encloses part of the gamma chain. F(1) is attached to F(0) by a central stalk formed by the gamma and epsilon chains, while a peripheral stalk is formed by the delta and b chains.

It localises to the cell inner membrane. Its function is as follows. F(1)F(0) ATP synthase produces ATP from ADP in the presence of a proton or sodium gradient. F-type ATPases consist of two structural domains, F(1) containing the extramembraneous catalytic core and F(0) containing the membrane proton channel, linked together by a central stalk and a peripheral stalk. During catalysis, ATP synthesis in the catalytic domain of F(1) is coupled via a rotary mechanism of the central stalk subunits to proton translocation. Functionally, component of the F(0) channel, it forms part of the peripheral stalk, linking F(1) to F(0). The protein is ATP synthase subunit b of Chlorobium phaeobacteroides (strain BS1).